The following is a 171-amino-acid chain: MFVVKMVLGFLILLSPLCATGLDISQTDIIERSLNFLLFAGILWYFLAKKLRSFLRSKSLEISKRLEEIQAQLKVSKENKKKLLKELEQAKEKAELIISDANKEAYTITQKYELQTKIDVENLIKNSKALMDLEVKKIKRELVESVFKDLRESKKVSFNAQDCVNILKQRL.

A helical membrane pass occupies residues 2-22 (FVVKMVLGFLILLSPLCATGL).

It belongs to the ATPase B chain family. In terms of assembly, F-type ATPases have 2 components, F(1) - the catalytic core - and F(0) - the membrane proton channel. F(1) has five subunits: alpha(3), beta(3), gamma(1), delta(1), epsilon(1). F(0) has three main subunits: a(1), b(2) and c(10-14). The alpha and beta chains form an alternating ring which encloses part of the gamma chain. F(1) is attached to F(0) by a central stalk formed by the gamma and epsilon chains, while a peripheral stalk is formed by the delta and b chains.

The protein localises to the cell inner membrane. In terms of biological role, f(1)F(0) ATP synthase produces ATP from ADP in the presence of a proton or sodium gradient. F-type ATPases consist of two structural domains, F(1) containing the extramembraneous catalytic core and F(0) containing the membrane proton channel, linked together by a central stalk and a peripheral stalk. During catalysis, ATP synthesis in the catalytic domain of F(1) is coupled via a rotary mechanism of the central stalk subunits to proton translocation. Functionally, component of the F(0) channel, it forms part of the peripheral stalk, linking F(1) to F(0). This is ATP synthase subunit b from Helicobacter pylori (strain G27).